The following is a 474-amino-acid chain: Glutamate--tRNA ligase (474 aa).

Positions 18-28 match the 'HIGH' region motif; the sequence is PSPTGFLHIGG. The 'KMSKS' region signature appears at 244–248; it reads KLSKR. K247 lines the ATP pocket.

The protein belongs to the class-I aminoacyl-tRNA synthetase family. Glutamate--tRNA ligase type 1 subfamily. Monomer.

The protein resides in the cytoplasm. The catalysed reaction is tRNA(Glu) + L-glutamate + ATP = L-glutamyl-tRNA(Glu) + AMP + diphosphate. Catalyzes the attachment of glutamate to tRNA(Glu) in a two-step reaction: glutamate is first activated by ATP to form Glu-AMP and then transferred to the acceptor end of tRNA(Glu). This chain is Glutamate--tRNA ligase, found in Caulobacter sp. (strain K31).